Reading from the N-terminus, the 217-residue chain is 2-C-methyl-D-erythritol 4-phosphate cytidylyltransferase (217 aa).

This sequence belongs to the IspD/TarI cytidylyltransferase family. IspD subfamily.

It catalyses the reaction 2-C-methyl-D-erythritol 4-phosphate + CTP + H(+) = 4-CDP-2-C-methyl-D-erythritol + diphosphate. It participates in isoprenoid biosynthesis; isopentenyl diphosphate biosynthesis via DXP pathway; isopentenyl diphosphate from 1-deoxy-D-xylulose 5-phosphate: step 2/6. In terms of biological role, catalyzes the formation of 4-diphosphocytidyl-2-C-methyl-D-erythritol from CTP and 2-C-methyl-D-erythritol 4-phosphate (MEP). The sequence is that of 2-C-methyl-D-erythritol 4-phosphate cytidylyltransferase from Chlamydia abortus (strain DSM 27085 / S26/3) (Chlamydophila abortus).